The primary structure comprises 257 residues: MFQIDLNCDLGESFGAYKIGLDQDILEYVTSANIACGFHAGDPSVMRKTVALAAERGVKMGAHPGLPDLLGFGRRNMAISPEEAYDLVVYQIGALSGFLKAEGLHMQHVKPHGALYNMAAVDQKLSDAIAKAVYKVDPGLILFGLAESELVKAGERIGLQTANEVFADRTYQSDGTLTPRSQPDALIESDDAAVTQVIKMVKEGAVKSQQGHDVSLKADTVCIHGDGAHALTFAQKIRKQLKAAGIEVTAISEQRST.

Belongs to the LamB/PxpA family. Forms a complex composed of PxpA, PxpB and PxpC.

The catalysed reaction is 5-oxo-L-proline + ATP + 2 H2O = L-glutamate + ADP + phosphate + H(+). In terms of biological role, catalyzes the cleavage of 5-oxoproline to form L-glutamate coupled to the hydrolysis of ATP to ADP and inorganic phosphate. The polypeptide is 5-oxoprolinase subunit A (Bacillus subtilis (strain 168)).